The sequence spans 648 residues: 1-deoxy-D-xylulose-5-phosphate synthase 1 (648 aa).

Thiamine diphosphate is bound by residues His82 and 123–125; that span reads AHS. Residue Asp154 coordinates Mg(2+). Thiamine diphosphate is bound by residues 155–156, Asn183, Tyr292, and Glu374; that span reads GS. Residue Asn183 coordinates Mg(2+).

This sequence belongs to the transketolase family. DXPS subfamily. As to quaternary structure, homodimer. Mg(2+) is required as a cofactor. Requires thiamine diphosphate as cofactor.

The enzyme catalyses D-glyceraldehyde 3-phosphate + pyruvate + H(+) = 1-deoxy-D-xylulose 5-phosphate + CO2. It participates in metabolic intermediate biosynthesis; 1-deoxy-D-xylulose 5-phosphate biosynthesis; 1-deoxy-D-xylulose 5-phosphate from D-glyceraldehyde 3-phosphate and pyruvate: step 1/1. Functionally, catalyzes the acyloin condensation reaction between C atoms 2 and 3 of pyruvate and glyceraldehyde 3-phosphate to yield 1-deoxy-D-xylulose-5-phosphate (DXP). The chain is 1-deoxy-D-xylulose-5-phosphate synthase 1 from Cereibacter sphaeroides (strain ATCC 17023 / DSM 158 / JCM 6121 / CCUG 31486 / LMG 2827 / NBRC 12203 / NCIMB 8253 / ATH 2.4.1.) (Rhodobacter sphaeroides).